The primary structure comprises 89 residues: Cell division topological specificity factor (89 aa).

This sequence belongs to the MinE family.

Prevents the cell division inhibition by proteins MinC and MinD at internal division sites while permitting inhibition at polar sites. This ensures cell division at the proper site by restricting the formation of a division septum at the midpoint of the long axis of the cell. This chain is Cell division topological specificity factor, found in Klebsiella pneumoniae (strain 342).